Reading from the N-terminus, the 470-residue chain is L-fuculokinase (470 aa).

Belongs to the FGGY kinase family. The cofactor is a divalent metal cation.

It catalyses the reaction L-fuculose + ATP = L-fuculose 1-phosphate + ADP + H(+). The protein operates within carbohydrate degradation; L-fucose degradation; L-lactaldehyde and glycerone phosphate from L-fucose: step 2/3. Functionally, catalyzes the phosphorylation of L-fuculose. This is L-fuculokinase from Haemophilus influenzae (strain ATCC 51907 / DSM 11121 / KW20 / Rd).